The chain runs to 203 residues: Small ribosomal subunit protein uS4 (203 aa).

An S4 RNA-binding domain is found at 93–155 (RRLDSIVYRL…SKNLQQIRDA (63 aa)).

The protein belongs to the universal ribosomal protein uS4 family. In terms of assembly, part of the 30S ribosomal subunit. Contacts protein S5. The interaction surface between S4 and S5 is involved in control of translational fidelity.

Its function is as follows. One of the primary rRNA binding proteins, it binds directly to 16S rRNA where it nucleates assembly of the body of the 30S subunit. Functionally, with S5 and S12 plays an important role in translational accuracy. The chain is Small ribosomal subunit protein uS4 from Lactobacillus acidophilus (strain ATCC 700396 / NCK56 / N2 / NCFM).